The following is a 358-amino-acid chain: Glutamine synthetase (358 aa).

The region spanning 25–104 (VQAEYIWIDA…VLCECYDNDG (80 aa)) is the GS beta-grasp domain. The region spanning 111 to 358 (YRAHCKKVMD…ILVETTVLNN (248 aa)) is the GS catalytic domain.

The protein belongs to the glutamine synthetase family. In terms of assembly, homooctamer.

The protein resides in the cytoplasm. The catalysed reaction is L-glutamate + NH4(+) + ATP = L-glutamine + ADP + phosphate + H(+). This is Glutamine synthetase (GLN1) from Cryptococcus neoformans var. neoformans serotype D (strain B-3501A) (Filobasidiella neoformans).